The sequence spans 340 residues: DNA-directed RNA polymerase subunit alpha (340 aa).

The tract at residues 1-233 (MYRNWRDLIS…EQLSIFINFD (233 aa)) is alpha N-terminal domain (alpha-NTD). Residues 251 to 340 (VNENLYRSVD…RIRGERKDEE (90 aa)) are alpha C-terminal domain (alpha-CTD).

The protein belongs to the RNA polymerase alpha chain family. Homodimer. The RNAP catalytic core consists of 2 alpha, 1 beta, 1 beta' and 1 omega subunit. When a sigma factor is associated with the core the holoenzyme is formed, which can initiate transcription.

The enzyme catalyses RNA(n) + a ribonucleoside 5'-triphosphate = RNA(n+1) + diphosphate. DNA-dependent RNA polymerase catalyzes the transcription of DNA into RNA using the four ribonucleoside triphosphates as substrates. This is DNA-directed RNA polymerase subunit alpha from Geobacter metallireducens (strain ATCC 53774 / DSM 7210 / GS-15).